A 923-amino-acid chain; its full sequence is Glucosidase 2 subunit alpha (923 aa).

Residues 1-25 (MRYHGICWFIFQAAIIFAIFGSCQG) form the signal peptide. An N-linked (GlcNAc...) asparagine glycan is attached at Asn-262. Asp-524 (nucleophile) is an active-site residue. Residue Glu-527 is part of the active site. The N-linked (GlcNAc...) asparagine glycan is linked to Asn-563. Asp-600 (proton donor) is an active-site residue. N-linked (GlcNAc...) asparagine glycosylation is present at Asn-822.

Belongs to the glycosyl hydrolase 31 family. In terms of assembly, heterodimer of a catalytic subunit alpha (gls2) and a subunit beta (gtb1).

Its subcellular location is the endoplasmic reticulum. The enzyme catalyses N(4)-(alpha-D-Glc-(1-&gt;3)-alpha-D-Man-(1-&gt;2)-alpha-D-Man-(1-&gt;2)-alpha-D-Man-(1-&gt;3)-[alpha-D-Man-(1-&gt;2)-alpha-D-Man-(1-&gt;3)-[alpha-D-Man-(1-&gt;2)-alpha-D-Man-(1-&gt;6)]-alpha-D-Man-(1-&gt;6)]-beta-D-Man-(1-&gt;4)-beta-D-GlcNAc-(1-&gt;4)-beta-D-GlcNAc)-L-asparaginyl-[protein] + H2O = N(4)-(alpha-D-Man-(1-&gt;2)-alpha-D-Man-(1-&gt;2)-alpha-D-Man-(1-&gt;3)-[alpha-D-Man-(1-&gt;2)-alpha-D-Man-(1-&gt;3)-[alpha-D-Man-(1-&gt;2)-alpha-D-Man-(1-&gt;6)]-alpha-D-Man-(1-&gt;6)]-beta-D-Man-(1-&gt;4)-beta-D-GlcNAc-(1-&gt;4)-beta-D-GlcNAc)-L-asparaginyl-[protein] (N-glucan mannose isomer 9A1,2,3B1,2,3) + beta-D-glucose. It carries out the reaction N(4)-(alpha-D-Glc-(1-&gt;3)-alpha-D-Glc-(1-&gt;3)-alpha-D-Man-(1-&gt;2)-alpha-D-Man-(1-&gt;2)-alpha-D-Man-(1-&gt;3)-[alpha-D-Man-(1-&gt;2)-alpha-D-Man-(1-&gt;3)-[alpha-D-Man-(1-&gt;2)-alpha-D-Man-(1-&gt;6)]-alpha-D-Man-(1-&gt;6)]-beta-D-Man-(1-&gt;4)-beta-D-GlcNAc-(1-&gt;4)-beta-D-GlcNAc)-L-asparaginyl-[protein] + H2O = N(4)-(alpha-D-Glc-(1-&gt;3)-alpha-D-Man-(1-&gt;2)-alpha-D-Man-(1-&gt;2)-alpha-D-Man-(1-&gt;3)-[alpha-D-Man-(1-&gt;2)-alpha-D-Man-(1-&gt;3)-[alpha-D-Man-(1-&gt;2)-alpha-D-Man-(1-&gt;6)]-alpha-D-Man-(1-&gt;6)]-beta-D-Man-(1-&gt;4)-beta-D-GlcNAc-(1-&gt;4)-beta-D-GlcNAc)-L-asparaginyl-[protein] + beta-D-glucose. Its pathway is glycan metabolism; N-glycan metabolism. Its function is as follows. Catalytic subunit of glucosidase 2, which cleaves sequentially the 2 innermost alpha-1,3-linked glucose residues from the Glc(2)Man(9)GlcNAc(2) oligosaccharide precursor of immature glycoproteins. This chain is Glucosidase 2 subunit alpha, found in Schizosaccharomyces pombe (strain 972 / ATCC 24843) (Fission yeast).